The chain runs to 279 residues: 4-diphosphocytidyl-2-C-methyl-D-erythritol kinase (279 aa).

Lys-11 is an active-site residue. Residue Pro-95–Ser-105 coordinates ATP. The active site involves Asp-137.

It belongs to the GHMP kinase family. IspE subfamily.

The catalysed reaction is 4-CDP-2-C-methyl-D-erythritol + ATP = 4-CDP-2-C-methyl-D-erythritol 2-phosphate + ADP + H(+). It participates in isoprenoid biosynthesis; isopentenyl diphosphate biosynthesis via DXP pathway; isopentenyl diphosphate from 1-deoxy-D-xylulose 5-phosphate: step 3/6. Its function is as follows. Catalyzes the phosphorylation of the position 2 hydroxy group of 4-diphosphocytidyl-2C-methyl-D-erythritol. This is 4-diphosphocytidyl-2-C-methyl-D-erythritol kinase from Geobacter sulfurreducens (strain ATCC 51573 / DSM 12127 / PCA).